We begin with the raw amino-acid sequence, 464 residues long: Chromosomal replication initiator protein DnaA (464 aa).

A domain I, interacts with DnaA modulators region spans residues 1–74; that stretch reads MDAVGYEVFW…ERKFLELSGH (74 aa). The segment at 74–117 is domain II; sequence HPIKLLFAVKKGTPHGNTAPPKHVHTYLEKNSPAEVPSKKSFHP. The interval 118-341 is domain III, AAA+ region; sequence DLNRDYTFEN…GALTKIIAFI (224 aa). Positions 162, 164, 165, and 166 each coordinate ATP. The segment at 342 to 464 is domain IV, binds dsDNA; sequence EVSGSITIDI…LKSKVQDSIR (123 aa).

Belongs to the DnaA family. As to quaternary structure, oligomerizes as a right-handed, spiral filament on DNA at oriC.

The protein resides in the cytoplasm. Functionally, plays an essential role in the initiation and regulation of chromosomal replication. ATP-DnaA binds to the origin of replication (oriC) to initiate formation of the DNA replication initiation complex once per cell cycle. Binds the DnaA box (a 9 base pair repeat at the origin) and separates the double-stranded (ds)DNA. Forms a right-handed helical filament on oriC DNA; dsDNA binds to the exterior of the filament while single-stranded (ss)DNA is stabiized in the filament's interior. The ATP-DnaA-oriC complex binds and stabilizes one strand of the AT-rich DNA unwinding element (DUE), permitting loading of DNA polymerase. After initiation quickly degrades to an ADP-DnaA complex that is not apt for DNA replication. Binds acidic phospholipids. In Treponema pallidum (strain Nichols), this protein is Chromosomal replication initiator protein DnaA.